A 282-amino-acid polypeptide reads, in one-letter code: 1D-myo-inositol 2-acetamido-2-deoxy-alpha-D-glucopyranoside deacetylase (282 aa).

Residues histidine 6, aspartate 9, and histidine 141 each contribute to the Zn(2+) site.

The protein belongs to the MshB deacetylase family. The cofactor is Zn(2+).

The catalysed reaction is 1D-myo-inositol 2-acetamido-2-deoxy-alpha-D-glucopyranoside + H2O = 1D-myo-inositol 2-amino-2-deoxy-alpha-D-glucopyranoside + acetate. Catalyzes the deacetylation of 1D-myo-inositol 2-acetamido-2-deoxy-alpha-D-glucopyranoside (GlcNAc-Ins) in the mycothiol biosynthesis pathway. The polypeptide is 1D-myo-inositol 2-acetamido-2-deoxy-alpha-D-glucopyranoside deacetylase (Nocardiopsis dassonvillei (strain ATCC 23218 / DSM 43111 / CIP 107115 / JCM 7437 / KCTC 9190 / NBRC 14626 / NCTC 10488 / NRRL B-5397 / IMRU 509) (Actinomadura dassonvillei)).